A 935-amino-acid chain; its full sequence is Inter-alpha-trypsin inhibitor heavy chain H2 (935 aa).

An N-terminal signal peptide occupies residues Met1–Gly18. The propeptide occupies Phe19–Gln53. A VIT domain is found at Val45–Glu174. Asn107 is a glycosylation site (N-linked (GlcNAc...) asparagine). Residue Glu271 is modified to 4-carboxyglutamate. Positions Pro297 to Asp457 constitute a VWFA domain. A glycan (N-linked (GlcNAc...) asparagine) is linked at Asn434. Ser455 carries the phosphoserine modification. At Asp691 the chain carries Aspartate 1-(chondroitin 4-sulfate)-ester. The propeptide occupies Pro692–Pro935. Ser875 carries the phosphoserine modification.

Belongs to the ITIH family. I-alpha-I plasma protease inhibitors are assembled from one or two heavy chains (HC) and one light chain, bikunin. Inter-alpha-inhibitor (I-alpha-I) is composed of ITIH1/HC1, ITIH2/HC2 and bikunin. Heavy chains are linked to bikunin via chondroitin 4-sulfate esterified to the alpha-carboxyl of the C-terminal aspartate after propeptide cleavage. In terms of processing, phosphorylated by FAM20C in the extracellular medium.

The protein resides in the secreted. Its function is as follows. May act as a carrier of hyaluronan in serum or as a binding protein between hyaluronan and other matrix protein, including those on cell surfaces in tissues to regulate the localization, synthesis and degradation of hyaluronan which are essential to cells undergoing biological processes. The chain is Inter-alpha-trypsin inhibitor heavy chain H2 (ITIH2) from Sus scrofa (Pig).